Consider the following 249-residue polypeptide: MATHFARGILTEGHLISVRLPSQCHQEARNIPPHRQSRFLASRGLLAELMFMLYGIGELPEIVTLPKGKPVFSDKNLPSFSISYAGNMVGVALTTEGECGLDMELQRATRGFHSPHAPDNHTFSSNESLWISKQNDPNEARAQLITLRRSVLKLTGDVLNDDPRDLQLLPIAGRLKCAHVNHVEALCDAEDVLVWSVAVTPTIEKLSVWELDGKHGWKSLPDIHSRANNPTSRMMRFAQLSTVKAFSPN.

This is an uncharacterized protein from Escherichia coli O6:H1 (strain CFT073 / ATCC 700928 / UPEC).